The primary structure comprises 485 residues: Adenosylhomocysteinase (485 aa).

Positions 64, 139, and 205 each coordinate substrate. 206 to 208 provides a ligand contact to NAD(+); sequence TTT. Substrate contacts are provided by Lys235 and Asp239. NAD(+) contacts are provided by residues Asn240, 269–274, Glu292, Asn327, 348–350, and Asn397; these read GYGDVG and IGH.

It belongs to the adenosylhomocysteinase family. Homotetramer. Requires NAD(+) as cofactor.

The enzyme catalyses S-adenosyl-L-homocysteine + H2O = L-homocysteine + adenosine. It functions in the pathway amino-acid biosynthesis; L-homocysteine biosynthesis; L-homocysteine from S-adenosyl-L-homocysteine: step 1/1. In terms of biological role, adenosylhomocysteine is a competitive inhibitor of S-adenosyl-L-methionine-dependent methyl transferase reactions; therefore adenosylhomocysteinase may play a key role in the control of methylations via regulation of the intracellular concentration of adenosylhomocysteine. The chain is Adenosylhomocysteinase (SAHH) from Catharanthus roseus (Madagascar periwinkle).